Reading from the N-terminus, the 978-residue chain is Chaperone protein ClpB2, chloroplastic (978 aa).

A chloroplast-targeting transit peptide spans methionine 1 to arginine 76. Residues threonine 85–lysine 229 form the Clp R domain. Repeat stretches follow at residues phenylalanine 89–glutamine 154 and leucine 166–lysine 229. The segment at leucine 244 to proline 492 is i. ATP contacts are provided by residues glycine 289–threonine 296 and glycine 692–threonine 699. The II stretch occupies residues valine 618–serine 809.

The protein belongs to the ClpA/ClpB family.

The protein localises to the plastid. Its subcellular location is the chloroplast. In terms of biological role, molecular chaperone that may play a role in chloroplast development. This is Chaperone protein ClpB2, chloroplastic (CLPB2) from Oryza sativa subsp. japonica (Rice).